Here is a 460-residue protein sequence, read N- to C-terminus: Phosphoenolpyruvate carboxylase (460 aa).

This sequence belongs to the PEPCase type 2 family. In terms of assembly, homotetramer. Mg(2+) serves as cofactor.

It catalyses the reaction oxaloacetate + phosphate = phosphoenolpyruvate + hydrogencarbonate. Catalyzes the irreversible beta-carboxylation of phosphoenolpyruvate (PEP) to form oxaloacetate (OAA), a four-carbon dicarboxylic acid source for the tricarboxylic acid cycle. The chain is Phosphoenolpyruvate carboxylase from Pyrobaculum arsenaticum (strain DSM 13514 / JCM 11321 / PZ6).